We begin with the raw amino-acid sequence, 325 residues long: GMP reductase (325 aa).

Catalysis depends on C173, which acts as the Thioimidate intermediate. 202–225 (IIADGGIHEHGDIAKSIRFGATMV) lines the NADP(+) pocket.

It belongs to the IMPDH/GMPR family. GuaC type 2 subfamily.

The enzyme catalyses IMP + NH4(+) + NADP(+) = GMP + NADPH + 2 H(+). Its function is as follows. Catalyzes the irreversible NADPH-dependent deamination of GMP to IMP. It functions in the conversion of nucleobase, nucleoside and nucleotide derivatives of G to A nucleotides, and in maintaining the intracellular balance of A and G nucleotides. The sequence is that of GMP reductase from Albidiferax ferrireducens (strain ATCC BAA-621 / DSM 15236 / T118) (Rhodoferax ferrireducens).